The primary structure comprises 433 residues: Putative zinc metalloprotease BB_0118 (433 aa).

Residue histidine 17 participates in Zn(2+) binding. The active site involves glutamate 18. Histidine 21 is a Zn(2+) binding site. A helical transmembrane segment spans residues 98–120 (ILIYFAGPLFNLIFSFIVFIFIS). The PDZ domain occupies 193-265 (TVSLQDFLKE…VVEIKFSRNG (73 aa)). Transmembrane regions (helical) follow at residues 334 to 356 (VSGPVGIVGILSSSYSLGILYWI), 366 to 388 (LAGMNLFFIVIPIFDGGQIFISF), and 401 to 423 (TIYSFYSFGIFFGLFLFGLGLFN).

This sequence belongs to the peptidase M50B family. Zn(2+) is required as a cofactor.

It localises to the cell inner membrane. This is Putative zinc metalloprotease BB_0118 from Borreliella burgdorferi (strain ATCC 35210 / DSM 4680 / CIP 102532 / B31) (Borrelia burgdorferi).